Consider the following 529-residue polypeptide: Probable DNA helicase MPN_340 (529 aa).

In terms of domain architecture, UvrD-like helicase ATP-binding spans 2–285 (EHLNQEQKAA…FYTTQNYRSI (284 aa)). 23 to 30 (SGAGTGKT) serves as a coordination point for ATP.

Belongs to the helicase family. UvrD subfamily.

It catalyses the reaction Couples ATP hydrolysis with the unwinding of duplex DNA by translocating in the 3'-5' direction.. The catalysed reaction is ATP + H2O = ADP + phosphate + H(+). This is Probable DNA helicase MPN_340 from Mycoplasma pneumoniae (strain ATCC 29342 / M129 / Subtype 1) (Mycoplasmoides pneumoniae).